The chain runs to 105 residues: Cell division topological specificity factor (105 aa).

Belongs to the MinE family.

Prevents the cell division inhibition by proteins MinC and MinD at internal division sites while permitting inhibition at polar sites. This ensures cell division at the proper site by restricting the formation of a division septum at the midpoint of the long axis of the cell. This is Cell division topological specificity factor from Prochlorococcus marinus (strain MIT 9515).